Consider the following 943-residue polypeptide: 2-oxoglutarate dehydrogenase E1 component (943 aa).

It belongs to the alpha-ketoglutarate dehydrogenase family. In terms of assembly, homodimer. Part of the 2-oxoglutarate dehydrogenase (OGDH) complex composed of E1 (2-oxoglutarate dehydrogenase), E2 (dihydrolipoamide succinyltransferase) and E3 (dihydrolipoamide dehydrogenase); the complex contains multiple copies of the three enzymatic components (E1, E2 and E3). Requires thiamine diphosphate as cofactor.

It catalyses the reaction N(6)-[(R)-lipoyl]-L-lysyl-[protein] + 2-oxoglutarate + H(+) = N(6)-[(R)-S(8)-succinyldihydrolipoyl]-L-lysyl-[protein] + CO2. E1 component of the 2-oxoglutarate dehydrogenase (OGDH) complex which catalyzes the decarboxylation of 2-oxoglutarate, the first step in the conversion of 2-oxoglutarate to succinyl-CoA and CO(2). The polypeptide is 2-oxoglutarate dehydrogenase E1 component (Shouchella clausii (strain KSM-K16) (Alkalihalobacillus clausii)).